An 85-amino-acid polypeptide reads, in one-letter code: Insect toxin 2-53 (85 aa).

An N-terminal signal peptide occupies residues 1–21; it reads MKLLLLLIVSASMLIESLVNA. The LCN-type CS-alpha/beta domain maps to 22–82; it reads DGYIKRRDGC…TWKSETNTCG (61 aa). Cystine bridges form between Cys31/Cys81, Cys35/Cys56, Cys42/Cys63, and Cys46/Cys65. Glycine amide is present on Gly82.

Belongs to the long (4 C-C) scorpion toxin superfamily. Sodium channel inhibitor family. Beta subfamily. As to expression, expressed by the venom gland.

Its subcellular location is the secreted. Functionally, depressant insect toxins cause a transient contraction paralysis followed by a slow flaccid paralysis. They bind voltage-independently to sodium channels (Nav) and block action potentials, primarily by depolarizing the axonal membrane and suppressing the sodium current. The protein is Insect toxin 2-53 of Leiurus hebraeus (Hebrew deathstalker scorpion).